A 235-amino-acid polypeptide reads, in one-letter code: 2-C-methyl-D-erythritol 4-phosphate cytidylyltransferase (235 aa).

The protein belongs to the IspD/TarI cytidylyltransferase family. IspD subfamily.

The enzyme catalyses 2-C-methyl-D-erythritol 4-phosphate + CTP + H(+) = 4-CDP-2-C-methyl-D-erythritol + diphosphate. Its pathway is isoprenoid biosynthesis; isopentenyl diphosphate biosynthesis via DXP pathway; isopentenyl diphosphate from 1-deoxy-D-xylulose 5-phosphate: step 2/6. Functionally, catalyzes the formation of 4-diphosphocytidyl-2-C-methyl-D-erythritol from CTP and 2-C-methyl-D-erythritol 4-phosphate (MEP). This chain is 2-C-methyl-D-erythritol 4-phosphate cytidylyltransferase, found in Pseudomonas putida (strain W619).